Reading from the N-terminus, the 104-residue chain is Large ribosomal subunit protein bL21 (104 aa).

This sequence belongs to the bacterial ribosomal protein bL21 family. In terms of assembly, part of the 50S ribosomal subunit. Contacts protein L20.

In terms of biological role, this protein binds to 23S rRNA in the presence of protein L20. This is Large ribosomal subunit protein bL21 from Thermotoga sp. (strain RQ2).